Consider the following 132-residue polypeptide: Putative apolipoprotein(a)-like protein 2 (132 aa).

An N-terminal signal peptide occupies residues 1–21 (MEHKEVVLLLLLFLKSAPTET). The region spanning 27–105 (ECYHSNGQSY…RWEYCNLTRC (79 aa)) is the Kringle domain. Intrachain disulfides connect Cys-28-Cys-105, Cys-49-Cys-88, and Cys-77-Cys-100. Asn-101 is a glycosylation site (N-linked (GlcNAc...) asparagine).

Expressed in liver but not in other tissues tested.

It is found in the secreted. In Homo sapiens (Human), this protein is Putative apolipoprotein(a)-like protein 2 (LPAL2).